The chain runs to 310 residues: Peroxidase 44 (310 aa).

A signal peptide spans 1–20 (MRSITALFFLFCFLAPSALA). Cystine bridges form between Cys31–Cys110, Cys64–Cys69, Cys116–Cys305, and Cys194–Cys218. Catalysis depends on His62, which acts as the Proton acceptor. Ca(2+) is bound by residues Asp63, Val66, Gly68, Asp70, and Ser72. Residue Pro156 participates in substrate binding. Heme b is bound at residue His187. Position 188 (Ser188) interacts with Ca(2+). Asp229, Thr232, and Asp237 together coordinate Ca(2+).

Belongs to the peroxidase family. Classical plant (class III) peroxidase subfamily. The cofactor is heme b. It depends on Ca(2+) as a cofactor.

Its subcellular location is the secreted. It carries out the reaction 2 a phenolic donor + H2O2 = 2 a phenolic radical donor + 2 H2O. In terms of biological role, removal of H(2)O(2), oxidation of toxic reductants, biosynthesis and degradation of lignin, suberization, auxin catabolism, response to environmental stresses such as wounding, pathogen attack and oxidative stress. These functions might be dependent on each isozyme/isoform in each plant tissue. In Arabidopsis thaliana (Mouse-ear cress), this protein is Peroxidase 44 (PER44).